Reading from the N-terminus, the 125-residue chain is Large ribosomal subunit protein bL12 (125 aa).

The protein belongs to the bacterial ribosomal protein bL12 family. Homodimer. Part of the ribosomal stalk of the 50S ribosomal subunit. Forms a multimeric L10(L12)X complex, where L10 forms an elongated spine to which 2 to 4 L12 dimers bind in a sequential fashion. Binds GTP-bound translation factors.

In terms of biological role, forms part of the ribosomal stalk which helps the ribosome interact with GTP-bound translation factors. Is thus essential for accurate translation. The chain is Large ribosomal subunit protein bL12 from Sphingopyxis alaskensis (strain DSM 13593 / LMG 18877 / RB2256) (Sphingomonas alaskensis).